The chain runs to 1388 residues: Collagen alpha-1(XV) chain (1388 aa).

A signal peptide spans 1–27 (MAPRRNNGQCWCLLMLLSVSTPLPAVT). In terms of domain architecture, Laminin G-like spans 66-249 (AYSFGPGANV…SSASGETSGL (184 aa)). Positions 223–250 (TVHPDPRTPEELCDPEESSASGETSGLQ) are disordered. The interval 229 to 555 (RTPEELCDPE…WITPAQREHV (327 aa)) is nonhelical region 1 (NC1). Residues 240–249 (SSASGETSGL) show a composition bias toward polar residues. O-linked (Xyl...) (chondroitin sulfate) serine glycosylation is found at S243 and S247. T265 carries an O-linked (GalNAc...) threonine glycan. The segment at 266–301 (QASPKEAKVEPINTPPTPSSPFEDMELSGEPVPEGT) is disordered. N-linked (GlcNAc...) asparagine glycosylation is found at N306 and N324. S343 is a glycosylation site (O-linked (Xyl...) (chondroitin sulfate) serine). 4 tandem repeats follow at residues 358 to 408 (AATA…EERL), 409 to 459 (AATA…EDSL), 460 to 509 (TTAA…EEDL), and 510 to 555 (AAAT…REHV). The segment at 358–555 (AATAAGLAEV…WITPAQREHV (198 aa)) is 4 X tandem repeats. Residues 371-795 (TAGEAEASSV…VGPPGPRGPP (425 aa)) form a disordered region. The span at 379-392 (SVPTGGPTLSMSTE) shows a compositional bias: polar residues. A compositionally biased stretch (low complexity) spans 409-420 (AATAAGEAEALA). Residues 452–472 (GPSSEDSLTTAAAATEVSLST) show a composition bias toward polar residues. Residues 510–527 (AAATTEEPLITAGGEESG) are compositionally biased toward low complexity. Residues 528–540 (SPPPDGPPLPLPT) are compositionally biased toward pro residues. The interval 556-573 (GMKGQAGPKGEKGDAGEE) is triple-helical region 1 (COL1). Positions 574 to 618 (LPGPPEPSGPVGPTAGAEAEGSGLGWGSDVGSGSGDLVGSEQLLR) are nonhelical region 2 (NC2). Residues 595–609 (SGLGWGSDVGSGSGD) are compositionally biased toward gly residues. Collagen-like domains are found at residues 619 to 680 (GPPG…MKGE) and 681 to 731 (KGAR…PPGP). The segment at 619–732 (GPPGPPGPPG…PGPPGPPGPG (114 aa)) is triple-helical region 2 (COL2). A compositionally biased stretch (pro residues) spans 620–630 (PPGPPGPPGLP). A glycan (N-linked (GlcNAc...) asparagine) is linked at N687. Residues 716 to 731 (VMGPPGPPGPPGPPGP) are compositionally biased toward pro residues. The interval 733-763 (CTMGLGFEDTEGSGSTQLLNEPKLSRPTAAI) is nonhelical region 3 (NC3). An O-linked (Xyl...) (chondroitin sulfate) serine glycan is attached at S745. The segment at 764-798 (GLKGEKGDRGPKGERGMDGASIVGPPGPRGPPGHI) is triple-helical region 3 (COL3). Residues 766–780 (KGEKGDRGPKGERGM) show a composition bias toward basic and acidic residues. Residues 799–822 (KVLSNSLINITHGFMNFSDIPELV) form a nonhelical region 4 (NC4) region. N-linked (GlcNAc...) asparagine glycans are attached at residues N807 and N814. The 43-residue stretch at 823-865 (GPPGPDGLPGLPGFPGPRGPKGDTGLPGFPGLKGEQGEKGEPG) folds into the Collagen-like 3 domain. The interval 823 to 867 (GPPGPDGLPGLPGFPGPRGPKGDTGLPGFPGLKGEQGEKGEPGAI) is triple-helical region 4 (COL4). Residues 827–840 (PDGLPGLPGFPGPR) show a composition bias toward pro residues. The disordered stretch occupies residues 827 to 864 (PDGLPGLPGFPGPRGPKGDTGLPGFPGLKGEQGEKGEP). Residues 868 to 878 (LTEDIPLERLM) form a nonhelical region 5 (NC5) region. The 49-residue stretch at 879 to 927 (GKKGEPGMHGAPGPMGPKGPPGHKGEFGLPGRPGRPGLNGLKGTKGDPG) folds into the Collagen-like 4 domain. The interval 879-949 (GKKGEPGMHG…PGPPGPPGAV (71 aa)) is triple-helical region 5 (COL5). The interval 950–983 (INIKGAIFPIPVRPHCKMPVDTAHPGSPELITFH) is nonhelical region 6 (NC6). Residues 984-1013 (GVKGEKGSWGLPGSKGEKGDQGAQGPPGPP) form a triple-helical region 6 (COL6) region. Disordered regions lie at residues 988-1016 (EKGS…PLDL) and 1029-1133 (ENGD…GSRN). Residues 1014-1027 (LDLAYLRHFLNNLK) are nonhelical region 7 (NC7). Positions 1028–1045 (GENGDKGFKGEKGEKGDI) are triple-helical region 7 (COL7). The span at 1029-1044 (ENGDKGFKGEKGEKGD) shows a compositional bias: basic and acidic residues. A glycan (N-linked (GlcNAc...) asparagine) is linked at N1046. Residues 1046-1052 (NGSFLMS) form a nonhelical region 8 (NC8) region. The tract at residues 1053 to 1107 (GPPGLPGNPGPAGQKGETVVGPQGPPGAPGLPGPPGFGRPGDPGPPGPPGPPGPP) is triple-helical region 8 (COL8). Composition is skewed to pro residues over residues 1075-1107 (QGPP…PGPP) and 1117-1126 (PGPPGPPGQP). The interval 1108 to 1117 (AILGAAVALP) is nonhelical region 9 (NC9). Residues 1118–1132 (GPPGPPGQPGLPGSR) are triple-helical region 9 (COL9). The interval 1133–1388 (NLVTAFSNMD…ENSFMTDARK (256 aa)) is nonhelical region 10 (NC10). Disulfide bonds link C1237-C1377 and C1339-C1369.

It belongs to the multiplexin collagen family. As to quaternary structure, trimer; disulfide-linked. In terms of assembly, interacts moderately with EFEMP2. Post-translationally, prolines at the third position of the tripeptide repeating unit (G-X-Y) are hydroxylated in some or all of the chains. O-glycosylated; with core 1 or possibly core 8 glycans. Contains chondroitin sulfate. Detected in fibroblasts and urine (at protein level). Detected in placenta (at protein level). Expressed predominantly in internal organs such as adrenal gland, pancreas and kidney.

It is found in the secreted. The protein resides in the extracellular space. The protein localises to the extracellular matrix. Structural protein that stabilizes microvessels and muscle cells, both in heart and in skeletal muscle. In terms of biological role, restin potently inhibits angiogenesis. In Homo sapiens (Human), this protein is Collagen alpha-1(XV) chain (COL15A1).